Here is a 933-residue protein sequence, read N- to C-terminus: Anoctamin-7 (933 aa).

Over 1 to 355 the chain is Cytoplasmic; that stretch reads MRMAATAWAG…YFAWLGFYTG (355 aa). The interval 43–101 is disordered; it reads ETSSGSHCARSRMLRRRAQEEDSTVLIDVSPPEAEKRGSYGSTAHASEPGGQQAAACRA. The helical transmembrane segment at 356–376 threads the bilayer; that stretch reads WLLPAAVVGTLVFLVGCFLVF. Topologically, residues 377-420 are extracellular; sequence SDIPTQELCGSKDSFEMCPLCLDCPFWLLSSACALAQAGRLFDH. The helical transmembrane segment at 421 to 441 threads the bilayer; it reads GGTVFFSLFMALWAVLLLEYW. Over 442-499 the chain is Cytoplasmic; the sequence is KRKSATLAYRWDCSDYEDTEERPRPQFAASAPMTAPNPITGEDEPYFPERSRARRMLA. A helical membrane pass occupies residues 500-520; that stretch reads GSVVIVVMVAVVVMCLVSIIL. The Extracellular segment spans residues 521–550; that stretch reads YRAIMAIVVSRSGNTLLAAWASRIASLTGS. Residues 551-571 traverse the membrane as a helical segment; that stretch reads VVNLVFILILSKIYVSLAHVL. Topologically, residues 572–588 are cytoplasmic; the sequence is TRWEMHRTQTKFEDAFT. The chain crosses the membrane as a helical span at residues 589-609; sequence LKVFIFQFVNFYSSPVYIAFF. At 610–714 the chain is on the extracellular side; that stretch reads KGRFVGYPGN…FDEYLEMVLQ (105 aa). A helical membrane pass occupies residues 715–735; that stretch reads FGFVTIFVAACPLAPLFALLN. The Cytoplasmic segment spans residues 736 to 763; that stretch reads NWVEIRLDARKFVCEYRRPVAERAQDIG. Residues 764–784 traverse the membrane as a helical segment; the sequence is IWFHILAGLTHLAVISNAFLL. At 785–843 the chain is on the extracellular side; sequence AFSSDFLPRAYYRWTRAHDLRGFLNFTLARAPSSFAAAHNRTCRYRAFRDDDGHYSQTY. 2 N-linked (GlcNAc...) asparagine glycosylation sites follow: Asn809 and Asn824. Residues 844–864 traverse the membrane as a helical segment; it reads WNLLAIRLAFVIVFEHVVFSV. Over 865-933 the chain is Cytoplasmic; it reads GRLLDLLVPD…TVPKASQLQQ (69 aa). Residues 902 to 933 are disordered; that stretch reads GTNGTKDEQPEGSELSSHWTPFTVPKASQLQQ. The segment covering 915–933 has biased composition (polar residues); the sequence is ELSSHWTPFTVPKASQLQQ.

This sequence belongs to the anoctamin family. Specifically expressed in epithelial cells of the prostate (at protein level).

It localises to the cell membrane. The protein resides in the cell junction. Its subcellular location is the endoplasmic reticulum. The protein localises to the cytoplasm. It is found in the cytosol. It carries out the reaction a 1,2-diacyl-sn-glycero-3-phospho-L-serine(in) = a 1,2-diacyl-sn-glycero-3-phospho-L-serine(out). The catalysed reaction is a beta-D-galactosyl-(1&lt;-&gt;1')-N-acylsphing-4-enine(out) = a beta-D-galactosyl-(1&lt;-&gt;1')-N-acylsphing-4-enine(in). It catalyses the reaction a 1,2-diacyl-sn-glycero-3-phosphocholine(in) = a 1,2-diacyl-sn-glycero-3-phosphocholine(out). Functionally, has calcium-dependent phospholipid scramblase activity; scrambles phosphatidylserine, phosphatidylcholine and galactosylceramide. Does not exhibit calcium-activated chloride channel (CaCC) activity. May play a role in cell-cell interactions. This chain is Anoctamin-7 (ANO7), found in Homo sapiens (Human).